The sequence spans 400 residues: Acyl-CoA dehydrogenase FadE26 (400 aa).

Residues 127-130, Thr136, and Ser162 contribute to the FAD site; that span reads IGYS. Residue Glu247 is the Proton acceptor of the active site. FAD is bound at residue 380-382; it reads TNE.

The protein belongs to the acyl-CoA dehydrogenase family. Heterotetramer (dimer of heterodimers) composed of FadE26 and FadE27. The cofactor is FAD.

It carries out the reaction (25S)-3-oxocholest-4-en-26-oyl-CoA + A = 3-oxo-cholest-4,24-dien-26-oyl-CoA + AH2. It functions in the pathway steroid metabolism; cholesterol degradation. Its activity is regulated as follows. Uncompetitively inhibited by high concentration of 3-OCS-CoA. Its function is as follows. Involved in the first cycle of side chain dehydrogenation in the beta-oxidation of cholesterol catabolism. It contributes partly to the virulence by increasing the efficiency of beta-oxidation. Catalyzes the dehydrogenation of acyl-CoA ester side chains of (25S)-3-oxo-cholest-4-en-26-oyl-CoA (3-OCS-CoA) to yield (24E)-3-oxo-cholest-4,24-dien-26-oyl-CoA. Also able to dehydrogenate steroyl-CoA such as 3-oxo-chol-4-en-24-oyl-CoA (3-OCO-CoA) as well as 3-oxo-4-pregnene-20-carboxyl-CoA (3-OPC-CoA). It dehydrogenates only (25S)-OCS-CoA diastereomer. The chain is Acyl-CoA dehydrogenase FadE26 (fadE26) from Mycobacterium tuberculosis (strain ATCC 25618 / H37Rv).